The primary structure comprises 208 residues: Outer-membrane lipoprotein carrier protein (208 aa).

The first 21 residues, 1 to 21 (MKKLNTLLLVLGSLVATPSFA), serve as a signal peptide directing secretion. The tract at residues 188–208 (KSTFEFTPPEGVEIDDQSNGE) is disordered. The segment covering 199–208 (VEIDDQSNGE) has biased composition (acidic residues).

This sequence belongs to the LolA family. Monomer.

The protein localises to the periplasm. Its function is as follows. Participates in the translocation of lipoproteins from the inner membrane to the outer membrane. Only forms a complex with a lipoprotein if the residue after the N-terminal Cys is not an aspartate (The Asp acts as a targeting signal to indicate that the lipoprotein should stay in the inner membrane). This is Outer-membrane lipoprotein carrier protein from Pseudoalteromonas translucida (strain TAC 125).